A 247-amino-acid polypeptide reads, in one-letter code: C-type lectin domain family 7 member A (247 aa).

The Cytoplasmic segment spans residues 1-44; it reads MEYHPDLENLDEDGYTQLHFDSQSNTRIAVVSEKGSCAASPPWR. The ITAM-like signature appears at 15 to 18; sequence YTQL. Residues 45–65 form a helical; Signal-anchor for type II membrane protein membrane-spanning segment; sequence LIAVILGILCLVILVIAVVLG. At 66 to 247 the chain is on the extracellular side; it reads TMAIWRSNSG…YSICEKKFSM (182 aa). Residue Asn-91 is glycosylated (N-linked (GlcNAc...) asparagine). 3 disulfide bridges follow: Cys-120–Cys-131, Cys-148–Cys-241, and Cys-220–Cys-233. A C-type lectin domain is found at 127–242; that stretch reads YEKSCYLFSM…CSVPSYSICE (116 aa). 146–153 contributes to the (1,3-beta-D-glucosyl)n binding site; it reads RQCWQLGS. 3 residues coordinate a divalent metal cation: Lys-157, Asp-159, and Glu-163. Glu-195 provides a ligand contact to (1,3-beta-D-glucosyl)n. Glu-242 contacts a divalent metal cation.

Homodimer. Interacts with SYK; participates in leukocyte activation in presence of fungal pathogens. Interacts with CD37; this interaction controls CLEC7A-mediated IL-6 production. As to quaternary structure, interacts with RANBP9. Phosphorylated on tyrosine residues in response to beta-glucan binding. In terms of tissue distribution, highly expressed in peripheral blood leukocytes and dendritic cells. Detected in spleen, bone marrow, lung, muscle, stomach and placenta.

It localises to the cell membrane. The protein localises to the cytoplasm. Its function is as follows. Lectin that functions as a pattern recognizing receptor (PRR) specific for beta-1,3-linked and beta-1,6-linked glucans, which constitute cell wall constituents from pathogenic bacteria and fungi. Necessary for the TLR2-mediated inflammatory response and activation of NF-kappa-B: upon beta-glucan binding, recruits SYK via its ITAM motif and promotes a signaling cascade that activates some CARD domain-BCL10-MALT1 (CBM) signalosomes, leading to the activation of NF-kappa-B and MAP kinase p38 (MAPK11, MAPK12, MAPK13 and/or MAPK14) pathways which stimulate expression of genes encoding pro-inflammatory cytokines and chemokines. Enhances cytokine production in macrophages and dendritic cells. Mediates production of reactive oxygen species in the cell. Mediates phagocytosis of C.albicans conidia. Binds T-cells in a way that does not involve their surface glycans and plays a role in T-cell activation. Stimulates T-cell proliferation. Induces phosphorylation of SCIMP after binding beta-glucans. This is C-type lectin domain family 7 member A from Homo sapiens (Human).